Reading from the N-terminus, the 612-residue chain is Actin-binding LIM protein 2 (612 aa).

LIM zinc-binding domains lie at 22–81 (ILCN…LYGT), 81–141 (TRCF…TLVG), 151–210 (RSCG…KFGI), and 210–270 (IRCD…ARTE). C83, C86, H103, C106, C109, C112, C131, and C134 together coordinate Zn(2+). Residues C212, C215, H232, C235, C238, C241, H260, and C263 each contribute to the Zn(2+) site. Basic and acidic residues predominate over residues 269–278 (TEDKSKETRT). Disordered regions lie at residues 269-295 (TEDK…SGSP) and 341-433 (AVGD…DNIY). 2 stretches are compositionally biased toward low complexity: residues 279–295 (SSES…SGSP) and 364–373 (SSPSSAGSVS). Phosphoserine is present on residues S282, S294, S365, and S368. A compositionally biased stretch (polar residues) spans 394–416 (SGRSTPSLSVHSDSRPPSSTYQQ). Phosphoserine is present on S453. The segment at 471–520 (ADTRTNSPDLDSQSLSLSSGADQEPLQRMPGDSLYSRFPYSKPDTLPGPR) is disordered. T473 bears the Phosphothreonine mark. A phosphoserine mark is found at S477 and S579. Residues 477–489 (SPDLDSQSLSLSS) show a composition bias toward low complexity. In terms of domain architecture, HP spans 544–612 (TREYKIYPYD…NDLKKKALLF (69 aa)).

In terms of assembly, interacts with F-actin and ABRA.

The protein resides in the cytoplasm. Its function is as follows. May act as scaffold protein. May stimulate ABRA activity and ABRA-dependent SRF transcriptional activity. This is Actin-binding LIM protein 2 (Ablim2) from Rattus norvegicus (Rat).